The chain runs to 453 residues: F-box protein At4g27050 (453 aa).

In terms of domain architecture, F-box spans 3–51 (TDLISNLPDDVLGKILSLVPTKLAAATSVLSKRWRNLLPLVDSLDFDET).

In terms of assembly, part of a SCF (ASK-cullin-F-box) protein ligase complex.

Its pathway is protein modification; protein ubiquitination. In terms of biological role, component of SCF(ASK-cullin-F-box) E3 ubiquitin ligase complexes, which may mediate the ubiquitination and subsequent proteasomal degradation of target proteins. This is F-box protein At4g27050 from Arabidopsis thaliana (Mouse-ear cress).